The chain runs to 281 residues: Voltage-dependent L-type calcium channel subunit alpha-1S (281 aa).

The III repeat unit spans residues 1-8 (VGFVIVTF). The dihydropyridine binding stretch occupies residues 1–17 (VGFVIVTFQEQGESEYK). The IV repeat unit spans residues 45–281 (NPYQYQIWYV…TCGTGFAYFY (237 aa)). Residues 59–80 (YFEYLMFFLIMLNTICLGMQHY) traverse the membrane as a helical segment. A glycan (N-linked (GlcNAc...) asparagine) is linked at Asn-81. Residues 89–110 (VSDILNVAFTVLFTLEMILKLM) form a helical membrane-spanning segment. Residues 121–140 (PWNVFDFLIVIGSIIDVILS) traverse the membrane as a helical segment. Residues 153–171 (ITFFRLFRVMRLVKLLSRG) form a helical membrane-spanning segment. Residues 190 to 210 (YVALLIVMLFFIYAVIGMQMF) form a helical membrane-spanning segment. The pore-forming intramembrane region spans 233–251 (AVLLLFRCATGEAWQEILL). Positions 242–245 (TGEA) match the Selectivity filter of repeat IV motif. The tract at residues 258-281 (RCDPESDYAEGEEYTCGTGFAYFY) is dihydropyridine binding. Cysteines 259 and 273 form a disulfide. A phenylalkylamine binding region spans residues 270–281 (EYTCGTGFAYFY).

It belongs to the calcium channel alpha-1 subunit (TC 1.A.1.11) family. CACNA1S subfamily. Component of a calcium channel complex consisting of a pore-forming alpha subunit (CACNA1S) and the ancillary subunits CACNB1 or CACNB2, CACNG1 and CACNA2D1. The channel complex contains alpha, beta, gamma and delta subunits in a 1:1:1:1 ratio, i.e. it contains either CACNB1 or CACNB2. CACNA1S channel activity is modulated by the auxiliary subunits (CACNB1 or CACNB2, CACNG1 and CACNA2D1). Interacts with DYSF and JSRP1. Interacts with RYR1. Interacts with CALM. The alpha-1S subunit is found in two isoforms in the skeletal muscle: a minor form of 212 kDa containing the complete amino acid sequence, and a major form of 190 kDa derived from the full-length form by post-translational proteolysis close to Phe-1690. Post-translationally, both the minor and major forms are phosphorylated in vitro by PKA. Phosphorylation by PKA activates the calcium channel.

The protein localises to the cell membrane. It is found in the sarcolemma. The protein resides in the T-tubule. The enzyme catalyses Ca(2+)(in) = Ca(2+)(out). Its activity is regulated as follows. Channel activity is blocked by dihydropyridines (DHP), phenylalkylamines, and by benzothiazepines. Functionally, pore-forming, alpha-1S subunit of the voltage-gated calcium channel that gives rise to L-type calcium currents in skeletal muscle. Calcium channels containing the alpha-1S subunit play an important role in excitation-contraction coupling in skeletal muscle via their interaction with RYR1, which triggers Ca(2+) release from the sarcplasmic reticulum and ultimately results in muscle contraction. Long-lasting (L-type) calcium channels belong to the 'high-voltage activated' (HVA) group. The chain is Voltage-dependent L-type calcium channel subunit alpha-1S (CACNA1S) from Gallus gallus (Chicken).